The following is a 212-amino-acid chain: Phosphoribosyl-dephospho-CoA transferase (212 aa).

Catalysis depends on residues Asp139 and Asp141.

The protein belongs to the MdcG family.

It catalyses the reaction apo-[malonate decarboxylase ACP] + 2'-(5''-triphospho-alpha-D-ribosyl)-3'-dephospho-CoA = holo-[malonate decarboxylase ACP] + diphosphate. Functionally, transfers 2'-(5-triphosphoribosyl)-3'-dephosphocoenzyme-A to the apo-[acyl-carrier-protein] of the malonate decarboxylase to yield holo-[acyl-carrier-protein]. This Azotobacter vinelandii (strain DJ / ATCC BAA-1303) protein is Phosphoribosyl-dephospho-CoA transferase.